The following is an 860-amino-acid chain: Leucine--tRNA ligase (860 aa).

The 'HIGH' region signature appears at 42–52; the sequence is PYPSGRLHMGH. The 'KMSKS' region signature appears at 619–623; it reads KMSKS. K622 is a binding site for ATP.

This sequence belongs to the class-I aminoacyl-tRNA synthetase family.

The protein localises to the cytoplasm. It carries out the reaction tRNA(Leu) + L-leucine + ATP = L-leucyl-tRNA(Leu) + AMP + diphosphate. The chain is Leucine--tRNA ligase from Yersinia pestis bv. Antiqua (strain Angola).